A 541-amino-acid polypeptide reads, in one-letter code: Chaperonin GroEL 1 (541 aa).

ATP-binding positions include 29–32 (TLGP), 86–90 (DGTTT), glycine 413, 477–479 (NAA), and aspartate 493.

This sequence belongs to the chaperonin (HSP60) family. Forms a cylinder of 14 subunits composed of two heptameric rings stacked back-to-back. Interacts with the co-chaperonin GroES.

Its subcellular location is the cytoplasm. The enzyme catalyses ATP + H2O + a folded polypeptide = ADP + phosphate + an unfolded polypeptide.. Functionally, together with its co-chaperonin GroES, plays an essential role in assisting protein folding. The GroEL-GroES system forms a nano-cage that allows encapsulation of the non-native substrate proteins and provides a physical environment optimized to promote and accelerate protein folding. This chain is Chaperonin GroEL 1, found in Nocardioides sp. (strain ATCC BAA-499 / JS614).